The primary structure comprises 475 residues: NADH-quinone oxidoreductase subunit N (475 aa).

The next 14 helical transmembrane spans lie at 7 to 27, 40 to 60, 74 to 94, 105 to 125, 127 to 147, 161 to 181, 191 to 211, 242 to 262, 266 to 286, 295 to 315, 321 to 341, 365 to 385, 399 to 419, and 448 to 468; these read ISIAAPEALLIGVALIGVLLG, LLGALALAGAAFLAASQSAVD, FIAIAKAVSYGVGAIALLVAG, FEYTLLVMFGSAGMGVMLSAN, LMTLYMGIETLSLSSYVLAAF, YFVLGALASGLLLFGCSLVYG, IAAADQSIGLTFGLVLILMAL, APKLATVAVLANIMFTVFGVY, WMLIIAIVSAISMLVGAFGGL, LAYSSIANVGYALMGVAAGEV, VLTYMTIYVITTLGMFGIVLA, LAVAMTVLVFSVAGIPPMAGF, ELYWLVAVGVIGSVVSLGYYL, and GATILAFPVLVIWIGWMTGII.

The protein belongs to the complex I subunit 2 family. As to quaternary structure, NDH-1 is composed of 14 different subunits. Subunits NuoA, H, J, K, L, M, N constitute the membrane sector of the complex.

The protein localises to the cell inner membrane. It catalyses the reaction a quinone + NADH + 5 H(+)(in) = a quinol + NAD(+) + 4 H(+)(out). NDH-1 shuttles electrons from NADH, via FMN and iron-sulfur (Fe-S) centers, to quinones in the respiratory chain. The immediate electron acceptor for the enzyme in this species is believed to be ubiquinone. Couples the redox reaction to proton translocation (for every two electrons transferred, four hydrogen ions are translocated across the cytoplasmic membrane), and thus conserves the redox energy in a proton gradient. The protein is NADH-quinone oxidoreductase subunit N of Hirschia baltica (strain ATCC 49814 / DSM 5838 / IFAM 1418).